A 190-amino-acid chain; its full sequence is Recombination protein RecR (190 aa).

The C4-type zinc-finger motif lies at 58 to 73 (CEQCGALSENELCEIC). Residues 81-167 (NILCIVESPK…TFSKIAQGIP (87 aa)) form the Toprim domain.

Belongs to the RecR family.

May play a role in DNA repair. It seems to be involved in an RecBC-independent recombinational process of DNA repair. It may act with RecF and RecO. This is Recombination protein RecR from Campylobacter jejuni (strain RM1221).